Consider the following 577-residue polypeptide: Zinc finger-containing ubiquitin peptidase 1 (577 aa).

Residues 2–24 form a C2H2-type 1 zinc finger; the sequence is LSCDICGETVTSEPDRKAHLIVH. Residues 29-52 form a C2H2-type 2; atypical zinc finger; sequence IICPFCKLSGINYNEMCFHIETAH. 2 consecutive C2H2-type zinc fingers follow at residues 153-176 and 192-214; these read PECP…KTKH and YDCP…VDLH. The segment at 225-247 is MIU; the sequence is DRVQCSSDRELAHQLQQEEERKR. Basic and acidic residues predominate over residues 231 to 261; sequence SDRELAHQLQQEEERKRKSEESRQEREEFQK. The tract at residues 231–262 is disordered; the sequence is SDRELAHQLQQEEERKRKSEESRQEREEFQKL. The tract at residues 248 to 273 is zUBD/ZHA; that stretch reads KSEESRQEREEFQKLQRQYGLDNSGG. Position 261 is an N6-acetyllysine (Lys261). The Nucleophile role is filled by Cys359. His490 functions as the Proton acceptor in the catalytic mechanism. Asp511 is an active-site residue.

The protein belongs to the peptidase C78 family. ZUFSP subfamily. Interacts with RPA1 and RPA2.

The protein localises to the cytoplasm. Its subcellular location is the nucleus. It carries out the reaction Thiol-dependent hydrolysis of ester, thioester, amide, peptide and isopeptide bonds formed by the C-terminal Gly of ubiquitin (a 76-residue protein attached to proteins as an intracellular targeting signal).. Functionally, deubiquitinase with endodeubiquitinase activity that specifically interacts with and cleaves 'Lys-63'-linked long polyubiquitin chains. Shows only weak activity against 'Lys-11' and 'Lys-48'-linked chains. Plays an important role in genome stability pathways, functioning to prevent spontaneous DNA damage and also promote cellular survival in response to exogenous DNA damage. Modulates the ubiquitination status of replication protein A (RPA) complex proteins in response to replication stress. This chain is Zinc finger-containing ubiquitin peptidase 1, found in Rattus norvegicus (Rat).